Reading from the N-terminus, the 480-residue chain is CASP8 and FADD-like apoptosis regulator (480 aa).

DED domains lie at 1 to 73 (MSAE…RILK) and 92 to 170 (DYRV…KIQK). Positions 1–195 (MSAEVIHQVE…LQAAIQKSFK (195 aa)) are interaction with CASP8. An interaction with FADD region spans residues 1–227 (MSAEVIHQVE…GTQQEPVKKS (227 aa)). The tract at residues 1-305 (MSAEVIHQVE…FACMPEHRDY (305 aa)) is interaction with CASP8 propeptide. Residues 1-435 (MSAEVIHQVE…CLSQKLRQER (435 aa)) are not proteolytically processed and involved in apoptosis inhibition. Positions 192-435 (KSFKDPSNNF…CLSQKLRQER (244 aa)) are interaction with CASP3. The interval 192–480 (KSFKDPSNNF…LRKKLIPSYT (289 aa)) is interaction with TRAF1 and TRAF2. The tract at residues 217–480 (LGTQQEPVKK…LRKKLIPSYT (264 aa)) is interaction with CASP8 subunits p18 and p10. Positions 263-358 (ETELLRDTFT…AGKPKIFFIQ (96 aa)) are caspase. Positions 370 to 480 (SSLLEVDGPA…LRKKLIPSYT (111 aa)) are interaction with CASP8.

This sequence belongs to the peptidase C14A family. In terms of assembly, TNFRSF6 stimulation triggers recruitment to the death-inducing signaling complex (DISC) formed by TNFRSF6, FADD and CASP8. A proteolytic fragment (p43) stays associated with the DISC. Interacts with RIPK1. Post-translationally, proteolytically processed by CASP8 generating subunit p43 and p12.

Functionally, apoptosis regulator protein which may function as a crucial link between cell survival and cell death pathways in mammalian cells. Acts as an inhibitor of TNFRSF6 mediated apoptosis. A proteolytic fragment (p43) is likely retained in the death-inducing signaling complex (DISC) thereby blocking further recruitment and processing of caspase-8 at the complex. Full length and shorter isoforms have been shown either to induce apoptosis or to reduce TNFRSF-triggered apoptosis. Lacks enzymatic (caspase) activity. The polypeptide is CASP8 and FADD-like apoptosis regulator (CFLAR) (Pongo abelii (Sumatran orangutan)).